The chain runs to 738 residues: Ribosomal RNA large subunit methyltransferase K/L (738 aa).

Positions 46–157 (TAYRVCLWSR…ADQAVIGLDL (112 aa)) constitute a THUMP domain.

The protein belongs to the methyltransferase superfamily. RlmKL family.

The protein resides in the cytoplasm. It carries out the reaction guanosine(2445) in 23S rRNA + S-adenosyl-L-methionine = N(2)-methylguanosine(2445) in 23S rRNA + S-adenosyl-L-homocysteine + H(+). The enzyme catalyses guanosine(2069) in 23S rRNA + S-adenosyl-L-methionine = N(2)-methylguanosine(2069) in 23S rRNA + S-adenosyl-L-homocysteine + H(+). In terms of biological role, specifically methylates the guanine in position 2445 (m2G2445) and the guanine in position 2069 (m7G2069) of 23S rRNA. This is Ribosomal RNA large subunit methyltransferase K/L from Methylococcus capsulatus (strain ATCC 33009 / NCIMB 11132 / Bath).